Here is a 159-residue protein sequence, read N- to C-terminus: Virion assembly protein OPG100 (159 aa).

Belongs to the orthopoxvirus OPG100 family. Homodimer. Part of a complex composed of the kinase OPG054, OPG092, OPG114, OPG115, OPG142 and OPG157. Interacts with OPG175.

It localises to the virion. Its subcellular location is the host cytoplasm. Late protein which is a part of a large complex required for early virion morphogenesis. This complex participates in the formation of virosomes and the incorporation of virosomal contents into nascent immature virions. Plays a role in DNA packaging during immature virions (IV) formation. The chain is Virion assembly protein OPG100 (OPG100) from Homo sapiens (Human).